We begin with the raw amino-acid sequence, 375 residues long: Lipid-A-disaccharide synthase (375 aa).

Belongs to the LpxB family.

It catalyses the reaction a lipid X + a UDP-2-N,3-O-bis[(3R)-3-hydroxyacyl]-alpha-D-glucosamine = a lipid A disaccharide + UDP + H(+). It functions in the pathway bacterial outer membrane biogenesis; LPS lipid A biosynthesis. In terms of biological role, condensation of UDP-2,3-diacylglucosamine and 2,3-diacylglucosamine-1-phosphate to form lipid A disaccharide, a precursor of lipid A, a phosphorylated glycolipid that anchors the lipopolysaccharide to the outer membrane of the cell. The sequence is that of Lipid-A-disaccharide synthase from Pseudomonas putida (strain GB-1).